A 298-amino-acid chain; its full sequence is Tyrosine recombinase XerD (298 aa).

The region spanning 3–88 (SSHNNLLQNF…AIRQFYKFLK (86 aa)) is the Core-binding (CB) domain. In terms of domain architecture, Tyr recombinase spans 109-292 (SIPDYLTQDE…ANKTLREVHK (184 aa)). Residues Arg149, Lys173, His244, Arg247, and His270 contribute to the active site. The active-site O-(3'-phospho-DNA)-tyrosine intermediate is the Tyr279.

This sequence belongs to the 'phage' integrase family. XerD subfamily. As to quaternary structure, forms a cyclic heterotetrameric complex composed of two molecules of XerC and two molecules of XerD.

The protein localises to the cytoplasm. In terms of biological role, site-specific tyrosine recombinase, which acts by catalyzing the cutting and rejoining of the recombining DNA molecules. The XerC-XerD complex is essential to convert dimers of the bacterial chromosome into monomers to permit their segregation at cell division. It also contributes to the segregational stability of plasmids. This is Tyrosine recombinase XerD from Leptospira interrogans serogroup Icterohaemorrhagiae serovar copenhageni (strain Fiocruz L1-130).